We begin with the raw amino-acid sequence, 441 residues long: ATP-dependent protease ATPase subunit HslU (441 aa).

Residues Ile-18 and 60-65 (GVGKTE) contribute to the ATP site. The segment at 131–158 (ILDALLPRPRGSEYDHARDESSTRQTFR) is disordered. The span at 140–152 (RGSEYDHARDESS) shows a compositional bias: basic and acidic residues. ATP contacts are provided by Asp-254, Glu-320, and Arg-392.

Belongs to the ClpX chaperone family. HslU subfamily. As to quaternary structure, a double ring-shaped homohexamer of HslV is capped on each side by a ring-shaped HslU homohexamer. The assembly of the HslU/HslV complex is dependent on binding of ATP.

Its subcellular location is the cytoplasm. ATPase subunit of a proteasome-like degradation complex; this subunit has chaperone activity. The binding of ATP and its subsequent hydrolysis by HslU are essential for unfolding of protein substrates subsequently hydrolyzed by HslV. HslU recognizes the N-terminal part of its protein substrates and unfolds these before they are guided to HslV for hydrolysis. This Chromohalobacter salexigens (strain ATCC BAA-138 / DSM 3043 / CIP 106854 / NCIMB 13768 / 1H11) protein is ATP-dependent protease ATPase subunit HslU.